The primary structure comprises 163 residues: MGTSEAAPPPFARVAPALFIGNARAAGATELLVRAGITLCVNVSRQQPGPRAPGVAELRVPVFDDPAEDLLTHLEPTCAAMEAAVRDGGSCLVYCKNGRSRSAAVCTAYLMRHRGHSLDRAFQMVKSARPVAEPNLGFWAQLQKYEQTLQAQAILPREPIDPE.

The 142-residue stretch at proline 10 to alanine 151 folds into the Tyrosine-protein phosphatase domain. Cysteine 95 acts as the Phosphocysteine intermediate in catalysis.

Belongs to the protein-tyrosine phosphatase family. Non-receptor class dual specificity subfamily. Monomer.

It carries out the reaction O-phospho-L-tyrosyl-[protein] + H2O = L-tyrosyl-[protein] + phosphate. The enzyme catalyses O-phospho-L-seryl-[protein] + H2O = L-seryl-[protein] + phosphate. It catalyses the reaction O-phospho-L-threonyl-[protein] + H2O = L-threonyl-[protein] + phosphate. Its function is as follows. Has phosphatase activity with the synthetic substrate 6,8-difluoro-4-methylumbelliferyl phosphate (in vitro). Has almost no detectable activity with phosphotyrosine, even less activity with phosphothreonine and displays complete lack of activity with phosphoserine. The poor activity with phosphotyrosine may be due to steric hindrance by bulky amino acid sidechains that obstruct access to the active site. The protein is Dual specificity phosphatase 28 (Dusp28) of Mus musculus (Mouse).